A 293-amino-acid chain; its full sequence is Tyrosine recombinase XerD (293 aa).

One can recognise a Core-binding (CB) domain in the interval 1–83 (MHGLIADFIH…ALRKFYRFLL (83 aa)). The region spanning 104 to 287 (HLPATLSGTE…SNQHLVAVYH (184 aa)) is the Tyr recombinase domain. Residues arginine 144, lysine 168, histidine 239, arginine 242, and histidine 265 contribute to the active site. Catalysis depends on tyrosine 274, which acts as the O-(3'-phospho-DNA)-tyrosine intermediate.

It belongs to the 'phage' integrase family. XerD subfamily. As to quaternary structure, forms a cyclic heterotetrameric complex composed of two molecules of XerC and two molecules of XerD.

The protein resides in the cytoplasm. Functionally, site-specific tyrosine recombinase, which acts by catalyzing the cutting and rejoining of the recombining DNA molecules. The XerC-XerD complex is essential to convert dimers of the bacterial chromosome into monomers to permit their segregation at cell division. It also contributes to the segregational stability of plasmids. The sequence is that of Tyrosine recombinase XerD from Lacticaseibacillus casei (Lactobacillus casei).